The sequence spans 604 residues: Glutamine--fructose-6-phosphate aminotransferase [isomerizing] (604 aa).

The active-site Nucleophile; for GATase activity is the cysteine 2. The 217-residue stretch at 2-218 (CGIVGVVGNR…DKELVILTKD (217 aa)) folds into the Glutamine amidotransferase type-2 domain. SIS domains lie at 284 to 423 (IITS…ANGK) and 456 to 594 (VQAL…VDKP). The For Fru-6P isomerization activity role is filled by lysine 599.

In terms of assembly, homodimer.

The protein resides in the cytoplasm. The catalysed reaction is D-fructose 6-phosphate + L-glutamine = D-glucosamine 6-phosphate + L-glutamate. Catalyzes the first step in hexosamine metabolism, converting fructose-6P into glucosamine-6P using glutamine as a nitrogen source. This is Glutamine--fructose-6-phosphate aminotransferase [isomerizing] from Streptococcus pyogenes serotype M1.